Consider the following 208-residue polypeptide: Probable adenylyl-sulfate kinase (208 aa).

An ATP-binding site is contributed by 38-45 (GLSGSGKS). The Phosphoserine intermediate role is filled by Ser112.

It belongs to the APS kinase family.

It catalyses the reaction adenosine 5'-phosphosulfate + ATP = 3'-phosphoadenylyl sulfate + ADP + H(+). It functions in the pathway sulfur metabolism; hydrogen sulfide biosynthesis; sulfite from sulfate: step 2/3. Functionally, catalyzes the synthesis of activated sulfate. In Halalkalibacterium halodurans (strain ATCC BAA-125 / DSM 18197 / FERM 7344 / JCM 9153 / C-125) (Bacillus halodurans), this protein is Probable adenylyl-sulfate kinase.